Reading from the N-terminus, the 280-residue chain is Dimethylglycine N-methyltransferase (280 aa).

Belongs to the methyltransferase superfamily. Monomer.

It carries out the reaction N,N-dimethylglycine + S-adenosyl-L-methionine = glycine betaine + S-adenosyl-L-homocysteine + H(+). Its pathway is amine and polyamine biosynthesis; betaine biosynthesis via glycine pathway; betaine from glycine: step 3/3. In terms of biological role, catalyzes the methylation of dimethylglycine to betaine with S-adenosylmethionine (AdoMet) acting as the methyl donor. It has strict specificity for dimethylglycine as the methyl group acceptors. The protein is Dimethylglycine N-methyltransferase of Parasynechococcus marenigrum (strain WH8102).